The chain runs to 471 residues: Thymidine phosphorylase (471 aa).

Positions 1 to 10 are enriched in pro residues; that stretch reads MAAPGTPPPS. The tract at residues 1–21 is disordered; that stretch reads MAAPGTPPPSASGGGGGEPRQ. Residue threonine 6 is modified to Phosphothreonine. Substrate contacts are provided by histidine 102, arginine 188, serine 203, and lysine 207.

It belongs to the thymidine/pyrimidine-nucleoside phosphorylase family. As to quaternary structure, homodimer.

The enzyme catalyses thymidine + phosphate = 2-deoxy-alpha-D-ribose 1-phosphate + thymine. It functions in the pathway pyrimidine metabolism; dTMP biosynthesis via salvage pathway; dTMP from thymine: step 1/2. Catalyzes the reversible phosphorolysis of thymidine. The produced molecules are then utilized as carbon and energy sources or in the rescue of pyrimidine bases for nucleotide synthesis. The polypeptide is Thymidine phosphorylase (Tymp) (Mus musculus (Mouse)).